The primary structure comprises 213 residues: 3,4-dihydroxy-2-butanone 4-phosphate synthase (213 aa).

D-ribulose 5-phosphate contacts are provided by residues 27 to 28, D32, 140 to 144, and E164; these read RE and RTGHT. E28 provides a ligand contact to Mg(2+). A Mg(2+)-binding site is contributed by H143.

The protein belongs to the DHBP synthase family. As to quaternary structure, homodimer. Mg(2+) serves as cofactor. Requires Mn(2+) as cofactor.

It carries out the reaction D-ribulose 5-phosphate = (2S)-2-hydroxy-3-oxobutyl phosphate + formate + H(+). It functions in the pathway cofactor biosynthesis; riboflavin biosynthesis; 2-hydroxy-3-oxobutyl phosphate from D-ribulose 5-phosphate: step 1/1. Catalyzes the conversion of D-ribulose 5-phosphate to formate and 3,4-dihydroxy-2-butanone 4-phosphate. In Agrobacterium fabrum (strain C58 / ATCC 33970) (Agrobacterium tumefaciens (strain C58)), this protein is 3,4-dihydroxy-2-butanone 4-phosphate synthase.